A 138-amino-acid chain; its full sequence is Large ribosomal subunit protein uL16 (138 aa).

The protein belongs to the universal ribosomal protein uL16 family. As to quaternary structure, part of the 50S ribosomal subunit.

In terms of biological role, binds 23S rRNA and is also seen to make contacts with the A and possibly P site tRNAs. In Anaeromyxobacter dehalogenans (strain 2CP-C), this protein is Large ribosomal subunit protein uL16.